The chain runs to 158 residues: MLLTHLNEENQPKMVDIGDKETTERIALASGRISMNKEAYDAIINHGVKKGPVLQTAIIAGIMGAKKTSELIPMCHSIMLNGVDIDILEEKETCSFKLYARVKTQAKTGVEMEALMSVSIGLLTIYDMVKAIDKSMTISGVMLEHKSGGKSGDYNAKK.

Substrate-binding positions include 74-76 (MCH) and 112-113 (ME). D127 is a catalytic residue.

Belongs to the MoaC family. Homohexamer; trimer of dimers.

The enzyme catalyses (8S)-3',8-cyclo-7,8-dihydroguanosine 5'-triphosphate = cyclic pyranopterin phosphate + diphosphate. The protein operates within cofactor biosynthesis; molybdopterin biosynthesis. Its function is as follows. Catalyzes the conversion of (8S)-3',8-cyclo-7,8-dihydroguanosine 5'-triphosphate to cyclic pyranopterin monophosphate (cPMP). The sequence is that of Cyclic pyranopterin monophosphate synthase from Helicobacter pylori (strain G27).